A 544-amino-acid chain; its full sequence is Chaperonin GroEL (544 aa).

ATP is bound by residues 30–33 (TLGP), Lys-51, 87–91 (DGTTT), Gly-415, and Asp-495.

It belongs to the chaperonin (HSP60) family. As to quaternary structure, forms a cylinder of 14 subunits composed of two heptameric rings stacked back-to-back. Interacts with the co-chaperonin GroES.

Its subcellular location is the cytoplasm. The catalysed reaction is ATP + H2O + a folded polypeptide = ADP + phosphate + an unfolded polypeptide.. In terms of biological role, together with its co-chaperonin GroES, plays an essential role in assisting protein folding. The GroEL-GroES system forms a nano-cage that allows encapsulation of the non-native substrate proteins and provides a physical environment optimized to promote and accelerate protein folding. This Aeromonas salmonicida protein is Chaperonin GroEL.